The sequence spans 314 residues: Basic leucine zipper 63 (314 aa).

Serine 29 is modified (phosphoserine; by KIN10). The interval 94–177 (KPQDTSGRSD…SRRRKQAHLS (84 aa)) is disordered. Over residues 96–133 (QDTSGRSDNGGANESEQASLASSKATPMMSSAITSGSE) the composition is skewed to polar residues. The 64-residue stretch at 151-214 (NVKRVKRMLS…NDASVENRVL (64 aa)) folds into the bZIP domain. The basic motif stretch occupies residues 153–172 (KRVKRMLSNRESARRSRRRK). The short motif at 155–162 (VKRMLSNR) is the Nuclear localization signal 1 element. The segment at 179–193 (LETQVSQLRVENSKL) is leucine-zipper. The segment at 253 to 274 (SLPSETSNSPDTTSSQVTTPEI) is disordered. A phosphoserine; by KIN10 mark is found at serine 294 and serine 300. A Nuclear localization signal 2 motif is present at residues 295–302 (MRRVESLE).

The protein belongs to the bZIP family. As to quaternary structure, homodimer. Forms a heterodimer with LSD1, BZIP1, BZIP2, BZIP9, BZIP10, BZIP11, BZIP25, BZIP44 and BZIP53. Interacts with KIN10 and SNF4. Component of a ternary complex composed of BZIP2-BZIP63 heterodimer and KIN10. In terms of processing, phosphorylated. The phosphorylation at Ser-29, Ser-294 and Ser-300 by KIN10 strongly enhances its ability to form homo- as well as heterodimers and are then essential for its transcriptional activity. Expressed in roots, shoots, young leaves, pollen, and flowers.

Its subcellular location is the nucleus. Up-regulated by KIN10 under a phosphorylation-dependent manner. Transcription factor involved in controlling responses to starvation. BZIP2-BZIP63-KIN10 complex binds to the ETFQO promoter to up-regulate its transcription. This chain is Basic leucine zipper 63 (BZIP63), found in Arabidopsis thaliana (Mouse-ear cress).